A 114-amino-acid polypeptide reads, in one-letter code: Evasin P1096 (114 aa).

A signal peptide spans 1–23 (MELNAFTILHIAVFIAVGYYANT). Cystine bridges form between Cys-47–Cys-65, Cys-51–Cys-67, and Cys-61–Cys-78. Asn-50 carries an N-linked (GlcNAc...) asparagine glycan. The segment at 89–114 (DPSQDPSIDEAAPRESVSKRRSNGES) is disordered. The segment covering 99–114 (AAPRESVSKRRSNGES) has biased composition (basic and acidic residues).

The protein resides in the secreted. Functionally, salivary chemokine-binding protein which binds to host chemokine CXCL8. The sequence is that of Evasin P1096 from Ixodes ricinus (Common tick).